Reading from the N-terminus, the 311-residue chain is Porphobilinogen deaminase (311 aa).

Position 242 is an S-(dipyrrolylmethanemethyl)cysteine (Cys242).

It belongs to the HMBS family. In terms of assembly, monomer. It depends on dipyrromethane as a cofactor.

The enzyme catalyses 4 porphobilinogen + H2O = hydroxymethylbilane + 4 NH4(+). It participates in porphyrin-containing compound metabolism; protoporphyrin-IX biosynthesis; coproporphyrinogen-III from 5-aminolevulinate: step 2/4. Its function is as follows. Tetrapolymerization of the monopyrrole PBG into the hydroxymethylbilane pre-uroporphyrinogen in several discrete steps. This Vibrio cholerae serotype O1 (strain ATCC 39315 / El Tor Inaba N16961) protein is Porphobilinogen deaminase (hemC).